A 174-amino-acid polypeptide reads, in one-letter code: MGKITFYEDRGFQGRCYECSSDHVNLQSYFSRCNSIRVDSGCWMIYERPNYSGYQYYLRRGEYPDYQDWMGFNDSIKSCRIIPYSGSHKMRLYEREDYKGQMMELTDDCSCVQDRFHLNEIHSLNVLDGCWILYEMPNYRGRQFLLRPGEYRRYLDWGAMNAKVGSLRRVIDVY.

2 consecutive Beta/gamma crystallin 'Greek key' domains span residues 2–40 (GKITFYEDRGFQGRCYECSSDHVNLQSYFSRCNSIRVDS) and 41–83 (GCWM…RIIP). A connecting peptide region spans residues 84–87 (YSGS). 2 consecutive Beta/gamma crystallin 'Greek key' domains span residues 88 to 128 (HKMR…NVLD) and 129 to 171 (GCWI…RRVI).

It belongs to the beta/gamma-crystallin family. Monomer.

Its function is as follows. Crystallins are the dominant structural components of the vertebrate eye lens. The chain is Gamma-crystallin D (CRYGD) from Macropus fuliginosus (Western gray kangaroo).